An 83-amino-acid polypeptide reads, in one-letter code: uncharacterized protein (83 aa).

Residues 55–75 (FGIGAAGVLGSFVTGLLIGWV) form a helical membrane-spanning segment.

The protein resides in the host membrane. Functionally, may play a role in phage assembly. This is an uncharacterized protein from Pseudomonas phage Pf1 (Bacteriophage Pf1).